The chain runs to 460 residues: Anthocyanidin 3-O-glucoside 5-O-glucosyltransferase 1 (460 aa).

Positions 1–22 are cleaved as a signal peptide; the sequence is MVRRRVLLATFPAQGHINPALQ. The active-site Proton acceptor is the histidine 16. Histidine 16 contacts an anthocyanidin. Residues glutamine 338, histidine 353, tryptophan 356, asparagine 357, serine 358, glutamate 361, aspartate 377, and glutamine 378 each coordinate UDP-alpha-D-glucose.

It belongs to the UDP-glycosyltransferase family.

The enzyme catalyses an anthocyanidin 3-O-beta-D-glucoside + UDP-alpha-D-glucose = an anthocyanidin 3,5-di-O-beta-D-glucoside + UDP + 2 H(+). The protein operates within pigment biosynthesis; anthocyanin biosynthesis. Its function is as follows. Catalyzes the glucosylation at the O-5 position of anthocyanidin 3-glucosides to form anthocyanidin 3,5-di-O-glucosides using UDP-glucose as sugar donor. Anthocyanidin 3,5-di-O-glucosides are molecules that are responsible for pigmentation. Also acts on anthocyanidin 3-O-(6-O-malonylglucoside). Much less active with hydroxycinnamoylglucose derivatives. No activity in the absence of the 3-O-glucoside group. The polypeptide is Anthocyanidin 3-O-glucoside 5-O-glucosyltransferase 1 (PF3R4) (Perilla frutescens (Beefsteak mint)).